The primary structure comprises 286 residues: uncharacterized protein (286 aa).

NAD(+) contacts are provided by residues 4 to 18 (AVIGLGNMGQPIARN) and threonine 95. Lysine 171 is a catalytic residue. Lysine 239 is an NAD(+) binding site.

The protein belongs to the HIBADH-related family.

This is an uncharacterized protein from Bacillus subtilis (strain 168).